Here is a 423-residue protein sequence, read N- to C-terminus: MRSLGANMAAALRAAGVLLRDPLASSSWRVCQPWRWKSGAAAAAVTTETAQHAQGAKPQVQPQKRKPKTGILMLNMGGPETLGDVHDFLLRLFLDRDLMTLPIQNKLAPFIAKRRTPKIQEQYRRIGGGSPIKIWTSKQGEGMVKLLDELSPNTAPHKYYIGFRYVHPLTEEAIEEMERDGLERAIAFTQYPQYSCSTTGSSLNAIYRYYNQVGRKPTMKWSTIDRWPTHHLLIQCFADHILKELDHFPLEKRSEVVILFSAHSLPMSVVNRGDPYPQEVSATVQKVMERLEYCNPYRLVWQSKVGPMPWLGPQTDESIKGLCERGRKNILLVPIAFTSDHIETLYELDIEYSQVLAKECGVENIRRAESLNGNPLFSKALADLVHSHIQSNELCSKQLTLSCPLCVNPVCRETKSFFTSQQL.

A mitochondrion-targeting transit peptide spans 1 to 54 (MRSLGANMAAALRAAGVLLRDPLASSSWRVCQPWRWKSGAAAAAVTTETAQHAQ). Lys-57 is modified (N6-acetyllysine). 3 residues coordinate protoporphyrin IX: Arg-115, Tyr-123, and Ser-130. An N6-succinyllysine modification is found at Lys-138. Residue Cys-196 coordinates [2Fe-2S] cluster. Residues His-230 and Asp-383 contribute to the active site. 3 residues coordinate [2Fe-2S] cluster: Cys-403, Cys-406, and Cys-411. Residue Lys-415 is modified to N6-acetyllysine; alternate. Position 415 is an N6-succinyllysine; alternate (Lys-415).

The protein belongs to the ferrochelatase family. As to quaternary structure, homodimer. Homotetramer. Interacts with PGRMC1; the interaction results in decreased FECH activity. Interacts with ABCB10 and SLC25A37; this interaction forms an oligomeric complex. Forms a complex with ABCB7 and ABCB10, where a dimeric FECH bridges ABCB7 and ABCB10 homodimers; this complex may be required for cellular iron homeostasis, mitochondrial function and heme biosynthesis. Interacts with ABCB7 and ABCB10. It depends on [2Fe-2S] cluster as a cofactor.

Its subcellular location is the mitochondrion inner membrane. The catalysed reaction is heme b + 2 H(+) = protoporphyrin IX + Fe(2+). Its pathway is porphyrin-containing compound metabolism; protoheme biosynthesis; protoheme from protoporphyrin-IX: step 1/1. Its activity is regulated as follows. Inhibited by nitric oxide (NO). The 2Fe-2S cluster could act as a NO sensor. Functionally, catalyzes the ferrous insertion into protoporphyrin IX and participates in the terminal step in the heme biosynthetic pathway. This Homo sapiens (Human) protein is Ferrochelatase, mitochondrial.